A 155-amino-acid chain; its full sequence is Transcription antitermination protein NusB (155 aa).

The protein belongs to the NusB family.

Involved in transcription antitermination. Required for transcription of ribosomal RNA (rRNA) genes. Binds specifically to the boxA antiterminator sequence of the ribosomal RNA (rrn) operons. This chain is Transcription antitermination protein NusB, found in Mesorhizobium japonicum (strain LMG 29417 / CECT 9101 / MAFF 303099) (Mesorhizobium loti (strain MAFF 303099)).